A 159-amino-acid chain; its full sequence is Ascorbate-specific PTS system EIIA component (159 aa).

Positions V9 to V152 constitute a PTS EIIA type-2 domain. Residue H71 is the Tele-phosphohistidine intermediate of the active site. A Phosphohistidine modification is found at H71.

Its subcellular location is the cytoplasm. The phosphoenolpyruvate-dependent sugar phosphotransferase system (sugar PTS), a major carbohydrate active transport system, catalyzes the phosphorylation of incoming sugar substrates concomitantly with their translocation across the cell membrane. The enzyme II UlaABC PTS system is involved in ascorbate transport. This is Ascorbate-specific PTS system EIIA component (ulaC) from Mycoplasma pneumoniae (strain ATCC 29342 / M129 / Subtype 1) (Mycoplasmoides pneumoniae).